Consider the following 264-residue polypeptide: Undecaprenyl-diphosphatase (264 aa).

8 helical membrane passes run 1–21 (MEISHVIVLALVQGISEFLPI), 39–59 (QGLAFDVAVHVGTLSAILFYF), 83–103 (SLLVWCVGFATIPVGIFGLLF), 113–133 (SGVVIAVTTIIFGIALYFADL), 143–163 (MTIKFALIIGLAQAVALIPGV), 184–204 (ANFSFLLSIPVIILAGGLESI), 220–240 (LGVIISAVSAYICVKLFMGII), and 243–263 (IRMLPFVIYRLILGAFLLYLF).

The protein belongs to the UppP family.

The protein localises to the cell inner membrane. The enzyme catalyses di-trans,octa-cis-undecaprenyl diphosphate + H2O = di-trans,octa-cis-undecaprenyl phosphate + phosphate + H(+). Functionally, catalyzes the dephosphorylation of undecaprenyl diphosphate (UPP). Confers resistance to bacitracin. The chain is Undecaprenyl-diphosphatase from Campylobacter concisus (strain 13826).